We begin with the raw amino-acid sequence, 481 residues long: Dihydrolipoyl dehydrogenase (481 aa).

FAD contacts are provided by residues 34 to 42 (EREHMGGIC) and Lys-51. The cysteines at positions 42 and 47 are disulfide-linked. NAD(+)-binding positions include 195 to 199 (GSGAI), Glu-218, and 284 to 287 (AVGV). Asp-326 and Ala-334 together coordinate FAD. His-460 functions as the Proton acceptor in the catalytic mechanism.

The protein belongs to the class-I pyridine nucleotide-disulfide oxidoreductase family. In terms of assembly, homodimer. FAD is required as a cofactor.

The protein resides in the cytoplasm. The catalysed reaction is N(6)-[(R)-dihydrolipoyl]-L-lysyl-[protein] + NAD(+) = N(6)-[(R)-lipoyl]-L-lysyl-[protein] + NADH + H(+). Lipoamide dehydrogenase is a component of the alpha-ketoacid dehydrogenase complexes. This is Dihydrolipoyl dehydrogenase (lpdA) from Rhizobium etli (strain ATCC 51251 / DSM 11541 / JCM 21823 / NBRC 15573 / CFN 42).